The primary structure comprises 239 residues: Endonuclease V (239 aa).

Mg(2+) contacts are provided by D50 and D118.

The protein belongs to the endonuclease V family. It depends on Mg(2+) as a cofactor.

It localises to the cytoplasm. It carries out the reaction Endonucleolytic cleavage at apurinic or apyrimidinic sites to products with a 5'-phosphate.. Functionally, DNA repair enzyme involved in the repair of deaminated bases. Selectively cleaves double-stranded DNA at the second phosphodiester bond 3' to a deoxyinosine leaving behind the intact lesion on the nicked DNA. The polypeptide is Endonuclease V (Xylella fastidiosa (strain Temecula1 / ATCC 700964)).